Consider the following 447-residue polypeptide: Exodeoxyribonuclease 7 large subunit (447 aa).

The protein belongs to the XseA family. As to quaternary structure, heterooligomer composed of large and small subunits.

It localises to the cytoplasm. It carries out the reaction Exonucleolytic cleavage in either 5'- to 3'- or 3'- to 5'-direction to yield nucleoside 5'-phosphates.. Bidirectionally degrades single-stranded DNA into large acid-insoluble oligonucleotides, which are then degraded further into small acid-soluble oligonucleotides. This chain is Exodeoxyribonuclease 7 large subunit, found in Pediococcus pentosaceus (strain ATCC 25745 / CCUG 21536 / LMG 10740 / 183-1w).